The primary structure comprises 206 residues: Cytochrome b6-f complex iron-sulfur subunit, chloroplastic (206 aa).

The N-terminal 29 residues, 1–29 (MAMITSRRAAAPCKAQATRRSRVMSVVRA), are a transit peptide targeting the chloroplast. The helical transmembrane segment at 48–68 (ILLGGASLPVGSLALGYGAFF) threads the bilayer. In terms of domain architecture, Rieske spans 92–188 (ANAWLATHQK…CDVQEDGLVT (97 aa)). [2Fe-2S] cluster contacts are provided by C134, H136, C152, and H155. Residues C139 and C154 are joined by a disulfide bond.

The protein belongs to the Rieske iron-sulfur protein family. The 4 large subunits of the cytochrome b6-f complex are cytochrome b6, subunit IV (17 kDa polypeptide, petD), cytochrome f and the Rieske protein, while the 4 small subunits are petG, petL, petM and petN. The complex functions as a dimer. Requires [2Fe-2S] cluster as cofactor.

The protein localises to the plastid. It is found in the chloroplast thylakoid membrane. It catalyses the reaction 2 oxidized [plastocyanin] + a plastoquinol + 2 H(+)(in) = 2 reduced [plastocyanin] + a plastoquinone + 4 H(+)(out). In terms of biological role, component of the cytochrome b6-f complex, which mediates electron transfer between photosystem II (PSII) and photosystem I (PSI), cyclic electron flow around PSI, and state transitions. The polypeptide is Cytochrome b6-f complex iron-sulfur subunit, chloroplastic (petC) (Volvox carteri (Green alga)).